The sequence spans 481 residues: uncharacterized protein (481 aa).

The segment at 1-28 (MPQSNHYSHQSRSHNDRRRQQPDEKVQA) is disordered. Positions 29–87 (TVNIGQRFPLTIRRLGINGEGIGYYKHVITFVKGALPEEVVVAEVTAVHPRYLEAKIRS) constitute a TRAM domain. Residues Gln313, Tyr342, Asp363, and Asp411 each coordinate S-adenosyl-L-methionine. Cys438 (nucleophile) is an active-site residue.

This sequence belongs to the class I-like SAM-binding methyltransferase superfamily. RNA M5U methyltransferase family.

This is an uncharacterized protein from Lactiplantibacillus plantarum (strain ATCC BAA-793 / NCIMB 8826 / WCFS1) (Lactobacillus plantarum).